Reading from the N-terminus, the 136-residue chain is Ribonuclease YqgF (136 aa).

The protein belongs to the YqgF nuclease family. Monomer; also forms low amounts of dimers. Requires Mn(2+) as cofactor.

Its subcellular location is the cytoplasm. In terms of biological role, has robust sequence-specific RNase activity, acting as a 5'-3' exo/endonuclease on ssRNA substrates with minimally 3 consecutive adenine bases. Has no detectable nuclease activity on dsRNA, dsDNA or Holliday junction DNA. The protein is Ribonuclease YqgF of Deinococcus radiodurans (strain ATCC 13939 / DSM 20539 / JCM 16871 / CCUG 27074 / LMG 4051 / NBRC 15346 / NCIMB 9279 / VKM B-1422 / R1).